An 884-amino-acid chain; its full sequence is Bifunctional heparan sulfate N-deacetylase/N-sulfotransferase 2 (884 aa).

The Cytoplasmic segment spans residues 1 to 18 (MLKLWKVVRPARQLELHR). Residues 19–39 (LILLLIAFSLGSMGFLAYYVS) traverse the membrane as a helical; Signal-anchor for type II membrane protein segment. Over 40-884 (TSPKAKEPLP…REELQHSSSG (845 aa)) the chain is Lumenal. The segment at 41 to 598 (SPKAKEPLPL…KRHKDIWSKE (558 aa)) is heparan sulfate N-deacetylase 2. A disordered region spans residues 49–82 (PLPLGDCSSSGAAGGPGPVRPPVPPRPPRPPETA). Residues 66-79 (PVRPPVPPRPPRPP) show a composition bias toward pro residues. N-linked (GlcNAc...) asparagine glycosylation is found at N351 and N401. Positions 599-884 (KTCDRLPKFL…REELQHSSSG (286 aa)) are heparan sulfate N-sulfotransferase 2. K614 acts as the For sulfotransferase activity in catalysis. Residue 614 to 618 (KTGTT) coordinates 3'-phosphoadenylyl sulfate. N667 carries an N-linked (GlcNAc...) asparagine glycan. S712 is a 3'-phosphoadenylyl sulfate binding site. N-linked (GlcNAc...) asparagine glycans are attached at residues N727 and N803. Residues C818 and C828 are joined by a disulfide bond. 833–837 (KGRKY) serves as a coordination point for 3'-phosphoadenylyl sulfate.

Belongs to the sulfotransferase 1 family. NDST subfamily. As to quaternary structure, monomer.

The protein localises to the golgi apparatus membrane. It carries out the reaction alpha-D-glucosaminyl-[heparan sulfate](n) + 3'-phosphoadenylyl sulfate = N-sulfo-alpha-D-glucosaminyl-[heparan sulfate](n) + adenosine 3',5'-bisphosphate + 2 H(+). Its pathway is glycan metabolism; heparan sulfate biosynthesis. The protein operates within glycan metabolism; heparin biosynthesis. Its function is as follows. Essential bifunctional enzyme that catalyzes both the N-deacetylation and the N-sulfation of glucosamine (GlcNAc) of the glycosaminoglycan in heparan sulfate. Modifies the GlcNAc-GlcA disaccharide repeating sugar backbone to make N-sulfated heparosan, a prerequisite substrate for later modifications in heparin biosynthesis. Plays a role in determining the extent and pattern of sulfation of heparan sulfate. Required for the exosomal release of SDCBP, CD63 and syndecan. The sequence is that of Bifunctional heparan sulfate N-deacetylase/N-sulfotransferase 2 (NDST2) from Bos taurus (Bovine).